Reading from the N-terminus, the 710-residue chain is Bifunctional lysine-specific demethylase and histidyl-hydroxylase NO66 (710 aa).

Residues 103–137 form a disordered region; that stretch reads TDEMNKTKKKQKKIMKKEIRKRTKRKRKSVNKREL. Residues 109-132 are compositionally biased toward basic residues; that stretch reads TKKKQKKIMKKEIRKRTKRKRKSV. Residues 359 to 506 enclose the JmjC domain; sequence CSIQLTNPQS…DLLERVIPPA (148 aa). Residues His405, Asp407, and His472 each coordinate Fe cation.

Belongs to the ROX family. NO66 subfamily. Fe(2+) is required as a cofactor.

It localises to the nucleus. The catalysed reaction is N(6),N(6)-dimethyl-L-lysyl(36)-[histone H3] + 2 2-oxoglutarate + 2 O2 = L-lysyl(36)-[histone H3] + 2 formaldehyde + 2 succinate + 2 CO2. Functionally, oxygenase that can act as both a histone lysine demethylase and a ribosomal histidine hydroxylase. Specifically demethylates 'Lys-4' (H3K4me) and 'Lys-36' (H3K36me) of histone H3, thereby playing a central role in histone code. The sequence is that of Bifunctional lysine-specific demethylase and histidyl-hydroxylase NO66 from Brugia malayi (Filarial nematode worm).